Reading from the N-terminus, the 77-residue chain is Acyl carrier protein (77 aa).

Residues 2–77 (ADVMERVTKI…DVVDYINNNQ (76 aa)) form the Carrier domain. Ser37 bears the O-(pantetheine 4'-phosphoryl)serine mark.

The protein belongs to the acyl carrier protein (ACP) family. In terms of processing, 4'-phosphopantetheine is transferred from CoA to a specific serine of apo-ACP by AcpS. This modification is essential for activity because fatty acids are bound in thioester linkage to the sulfhydryl of the prosthetic group.

It is found in the cytoplasm. The protein operates within lipid metabolism; fatty acid biosynthesis. Functionally, carrier of the growing fatty acid chain in fatty acid biosynthesis. This chain is Acyl carrier protein, found in Shouchella clausii (strain KSM-K16) (Alkalihalobacillus clausii).